A 304-amino-acid polypeptide reads, in one-letter code: Recombination-associated protein RdgC (304 aa).

It belongs to the RdgC family.

It localises to the cytoplasm. It is found in the nucleoid. In terms of biological role, may be involved in recombination. This is Recombination-associated protein RdgC from Shewanella sp. (strain ANA-3).